The following is a 453-amino-acid chain: Cytochrome P450 monooxygenase CYP2 (453 aa).

Residues Met13–Ser29 traverse the membrane as a helical segment. N-linked (GlcNAc...) asparagine glycosylation is present at Asn85. Residue Cys397 coordinates heme.

It belongs to the cytochrome P450 family. The cofactor is heme.

It is found in the membrane. It functions in the pathway secondary metabolite biosynthesis. In terms of biological role, cytochrome P450 monooxygenase; part of the gene cluster that mediates the biosynthesis of a tyrosine-derived cytochalasan acting as a fungal signal recognized by resistant rice plants and leads to avirulence in Pi33 resistant rice cultivars. The first step in the pathway is catalyzed by the hybrid PKS-NRPS ACE1, assisted by the enoyl reductase RAP1, that are responsible for fusion of the tyrosine precursor and the polyketide backbone. The polyketide synthase module (PKS) of ACE1 is responsible for the synthesis of the polyketide backbone and the downstream nonribosomal peptide synthetase (NRPS) amidates the carboxyl end of the polyketide with the tyrosine precursor. Because ACE1 lacks a designated enoylreductase (ER) domain, the required activity is provided the enoyl reductase RAP1. Reduction by the hydrolyase ORFZ, followed by dehydration and intra-molecular Diels-Alder cyclization by the Diels-Alderase ORF3 then yield the required isoindolone-fused macrocycle. A number of oxidative steps catalyzed by the tailoring enzymes identified within the cluster, including cytochrome P450 monooxygenases CYP1 to CYP4, the FAD-linked oxidoreductase OXR2 and the short-chain dehydrogenase/reductase OXR1, are further required to afford the final cytochalasans that confer avirulence and which have still to be identified. The monooxygenase CYP1 has been shown to be a site-selective C-18 hydroxylase whereas the function of CYP3 is the site-selective epoxidation of the C-6/C-7 olefin that is present in some intermediate compounds. Finally, SYN2 and RAP2 are not required for avirulence in Pi33 resistant rice cultivars. The sequence is that of Cytochrome P450 monooxygenase CYP2 from Pyricularia oryzae (strain 70-15 / ATCC MYA-4617 / FGSC 8958) (Rice blast fungus).